Consider the following 160-residue polypeptide: Cyclic pyranopterin monophosphate synthase (160 aa).

Residues 77 to 79 (MCH) and 114 to 115 (ME) contribute to the substrate site. Residue aspartate 129 is part of the active site.

This sequence belongs to the MoaC family. As to quaternary structure, homohexamer; trimer of dimers.

It carries out the reaction (8S)-3',8-cyclo-7,8-dihydroguanosine 5'-triphosphate = cyclic pyranopterin phosphate + diphosphate. Its pathway is cofactor biosynthesis; molybdopterin biosynthesis. Catalyzes the conversion of (8S)-3',8-cyclo-7,8-dihydroguanosine 5'-triphosphate to cyclic pyranopterin monophosphate (cPMP). This is Cyclic pyranopterin monophosphate synthase from Listeria monocytogenes serovar 1/2a (strain ATCC BAA-679 / EGD-e).